Here is a 163-residue protein sequence, read N- to C-terminus: Nucleotide-binding protein BPUM_1028 (163 aa).

The protein belongs to the YajQ family.

Nucleotide-binding protein. The sequence is that of Nucleotide-binding protein BPUM_1028 from Bacillus pumilus (strain SAFR-032).